The sequence spans 247 residues: Adenosylcobinamide-GDP ribazoletransferase (247 aa).

The next 6 helical transmembrane spans lie at 31–51, 57–77, 109–129, 136–156, 189–209, and 218–238; these read VVWF…AAAL, PWLG…GLHL, FGVI…HWLL, PALV…TLLL, ITPI…WMWL, and ILGA…GVSL.

The protein belongs to the CobS family. It depends on Mg(2+) as a cofactor.

The protein localises to the cell inner membrane. It carries out the reaction alpha-ribazole + adenosylcob(III)inamide-GDP = adenosylcob(III)alamin + GMP + H(+). The enzyme catalyses alpha-ribazole 5'-phosphate + adenosylcob(III)inamide-GDP = adenosylcob(III)alamin 5'-phosphate + GMP + H(+). The protein operates within cofactor biosynthesis; adenosylcobalamin biosynthesis; adenosylcobalamin from cob(II)yrinate a,c-diamide: step 7/7. Its function is as follows. Joins adenosylcobinamide-GDP and alpha-ribazole to generate adenosylcobalamin (Ado-cobalamin). Also synthesizes adenosylcobalamin 5'-phosphate from adenosylcobinamide-GDP and alpha-ribazole 5'-phosphate. In Thiobacillus denitrificans (strain ATCC 25259 / T1), this protein is Adenosylcobinamide-GDP ribazoletransferase.